A 30-amino-acid chain; its full sequence is uncharacterized protein (30 aa).

The chain crosses the membrane as a helical span at residues 9–26 (YRLVIIVLISVYYRYRFF).

It localises to the plastid. The protein resides in the chloroplast membrane. This is an uncharacterized protein from Marchantia polymorpha (Common liverwort).